The chain runs to 455 residues: Gametocyte surface protein P45/48 (455 aa).

Positions 1–30 (MLYFFGNSRFFLFFFYFFFYFVLVIKSSVG) are cleaved as a signal peptide. In terms of domain architecture, 6-Cys 1 spans 48-186 (LGYKCDFSTE…ALVHVTVLKY (139 aa)). Disulfide bonds link C52–C74 and C106–C160. N-linked (GlcNAc...) asparagine glycosylation is found at N135, N194, N275, and N307. One can recognise a 6-Cys 2 domain in the interval 302–433 (VIYGCNFSKD…ITGFMNIKIG (132 aa)). Intrachain disulfides connect C306–C334, C351–C419, and C359–C417. G433 carries GPI-anchor amidated glycine lipidation. Positions 434–455 (SAYYAFLSKLFIIFIPLFFMWL) are cleaved as a propeptide — removed in mature form.

In terms of assembly, heterodimer; heterodimerizes with PF230.

It localises to the cell surface. It is found in the cell membrane. Gametocyte surface protein required for male fertility. The chain is Gametocyte surface protein P45/48 (PB45/48) from Plasmodium berghei (strain Anka).